An 804-amino-acid chain; its full sequence is ATP-dependent RNA helicase dbp4 (804 aa).

A disordered region spans residues 1 to 24 (MAPANAPRNGKYAKSSQRTLKRKR). The Q motif motif lies at 46 to 74 (KAFTDLPLSEPTLSGLSASHYKTLTDIQS). In terms of domain architecture, Helicase ATP-binding spans 77–251 (VSHALKGRDI…RLSLQDPEYV (175 aa)). An ATP-binding site is contributed by 90–97 (AKTGSGKT). Positions 199 to 202 (DEAD) match the DEAD box motif. Residues 277–436 (KLDILWSFIR…SIKNQLQNMC (160 aa)) enclose the Helicase C-terminal domain. 3 disordered regions span residues 493 to 541 (GDDT…DRMF), 589 to 615 (DKQLEVGGSSDESGSDSEAETGKKDVK), and 695 to 804 (LADV…GLLG). Over residues 521–541 (DEKKSKKKDAPQVRTKYDRMF) the composition is skewed to basic and acidic residues. Residues 695 to 705 (LADVEDKELVK) are compositionally biased toward basic and acidic residues. The span at 706–715 (QKRREKKEKR) shows a compositional bias: basic residues.

Belongs to the DEAD box helicase family. DDX10/DBP4 subfamily. As to quaternary structure, interacts with the U3 and U14 snoRNAs. Associates with pre-ribosomal complexes.

It localises to the nucleus. It is found in the nucleolus. It catalyses the reaction ATP + H2O = ADP + phosphate + H(+). Functionally, ATP-dependent RNA helicase required for ribosome biogenesis. Involved in the release of U14 snoRNA in pre-ribosomal complexes. Required for pre-rRNA cleavage at site A2. The sequence is that of ATP-dependent RNA helicase dbp4 (dbp4) from Aspergillus terreus (strain NIH 2624 / FGSC A1156).